The following is a 144-amino-acid chain: Large ribosomal subunit protein uL11 (144 aa).

The protein belongs to the universal ribosomal protein uL11 family. In terms of assembly, part of the ribosomal stalk of the 50S ribosomal subunit. Interacts with L10 and the large rRNA to form the base of the stalk. L10 forms an elongated spine to which L12 dimers bind in a sequential fashion forming a multimeric L10(L12)X complex. Post-translationally, one or more lysine residues are methylated.

Functionally, forms part of the ribosomal stalk which helps the ribosome interact with GTP-bound translation factors. This chain is Large ribosomal subunit protein uL11, found in Rhodococcus opacus (strain B4).